Reading from the N-terminus, the 146-residue chain is Probable transporter XF_0765 (146 aa).

The next 4 helical transmembrane spans lie at 9–29 (FTVALAAGLLFGFGLALSEMI), 46–66 (NPSLLFVLGSALAVAFPGMAL), 91–111 (IVFGSAIFGTGWGLTGLCPGP), and 116–136 (LSTGLGPVLLFVAAMAAGMII).

It belongs to the TsuA/YedE (TC 9.B.102) family.

Its subcellular location is the cell inner membrane. The chain is Probable transporter XF_0765 from Xylella fastidiosa (strain 9a5c).